Reading from the N-terminus, the 787-residue chain is Glycine-rich domain-containing protein 2 (787 aa).

Expressed in leaves, inflorescences, buds, flowers and immature siliques.

Functionally, involved in development and stress responses, probably through an auxin-dependent mechanism. The protein is Glycine-rich domain-containing protein 2 of Arabidopsis thaliana (Mouse-ear cress).